The following is a 521-amino-acid chain: Bifunctional purine biosynthesis protein PurH (521 aa).

The region spanning 1 to 145 (MIKQALISVS…KNHRDVTVVV (145 aa)) is the MGS-like domain.

This sequence belongs to the PurH family.

It carries out the reaction (6R)-10-formyltetrahydrofolate + 5-amino-1-(5-phospho-beta-D-ribosyl)imidazole-4-carboxamide = 5-formamido-1-(5-phospho-D-ribosyl)imidazole-4-carboxamide + (6S)-5,6,7,8-tetrahydrofolate. It catalyses the reaction IMP + H2O = 5-formamido-1-(5-phospho-D-ribosyl)imidazole-4-carboxamide. Its pathway is purine metabolism; IMP biosynthesis via de novo pathway; 5-formamido-1-(5-phospho-D-ribosyl)imidazole-4-carboxamide from 5-amino-1-(5-phospho-D-ribosyl)imidazole-4-carboxamide (10-formyl THF route): step 1/1. The protein operates within purine metabolism; IMP biosynthesis via de novo pathway; IMP from 5-formamido-1-(5-phospho-D-ribosyl)imidazole-4-carboxamide: step 1/1. The chain is Bifunctional purine biosynthesis protein PurH from Burkholderia thailandensis (strain ATCC 700388 / DSM 13276 / CCUG 48851 / CIP 106301 / E264).